The sequence spans 681 residues: Nucleolar GTP-binding protein 1 (681 aa).

In terms of domain architecture, OBG-type G spans 170–341; sequence RTLILCGFPN…LRDRACDELL (172 aa). Residues 176–183, 222–226, and 290–293 contribute to the GTP site; these read GFPNVGKS, DTPGI, and NKVD.

The protein belongs to the TRAFAC class OBG-HflX-like GTPase superfamily. OBG GTPase family. NOG subfamily. As to expression, ubiquitously expressed.

The protein resides in the nucleus. It is found in the nucleolus. Functionally, involved in the biogenesis of the 60S ribosomal subunit. Has a role in regulating longevity, growth and brood size. May regulate fat storage via the insulin/IGF pathway. This chain is Nucleolar GTP-binding protein 1, found in Caenorhabditis elegans.